The following is a 90-amino-acid chain: Acylphosphatase (90 aa).

An Acylphosphatase-like domain is found at 5–90; sequence GCKVIVSGIV…YQKTNDFIAC (86 aa). Residues arginine 20 and asparagine 38 contribute to the active site.

This sequence belongs to the acylphosphatase family.

It catalyses the reaction an acyl phosphate + H2O = a carboxylate + phosphate + H(+). The chain is Acylphosphatase (acyP) from Psychromonas ingrahamii (strain DSM 17664 / CCUG 51855 / 37).